Reading from the N-terminus, the 198-residue chain is Prostamide/prostaglandin F synthase (198 aa).

At Tyr-108 the chain carries Phosphotyrosine.

The protein belongs to the peroxiredoxin-like PRXL2 family. Prostamide/prostaglandin F synthase subfamily.

The protein resides in the cytoplasm. Its subcellular location is the cytosol. It catalyses the reaction prostaglandin H2 + [thioredoxin]-dithiol = prostaglandin F2alpha + [thioredoxin]-disulfide. The enzyme catalyses prostamide F2alpha + [thioredoxin]-disulfide = prostamide H2 + [thioredoxin]-dithiol. Catalyzes the reduction of prostaglandin-ethanolamide H(2) (prostamide H(2)) to prostamide F(2alpha) with NADPH as proton donor. Also able to reduce prostaglandin H(2) to prostaglandin F(2alpha). The chain is Prostamide/prostaglandin F synthase (PRXL2B) from Pongo abelii (Sumatran orangutan).